We begin with the raw amino-acid sequence, 163 residues long: NADH-quinone oxidoreductase subunit I (163 aa).

2 consecutive 4Fe-4S ferredoxin-type domains span residues 54-84 (LRRY…IESE) and 94-123 (TRYD…ETRI). Residues cysteine 64, cysteine 67, cysteine 70, cysteine 74, cysteine 103, cysteine 106, cysteine 109, and cysteine 113 each coordinate [4Fe-4S] cluster.

It belongs to the complex I 23 kDa subunit family. NDH-1 is composed of 14 different subunits. Subunits NuoA, H, J, K, L, M, N constitute the membrane sector of the complex. [4Fe-4S] cluster serves as cofactor.

The protein localises to the cell inner membrane. The catalysed reaction is a quinone + NADH + 5 H(+)(in) = a quinol + NAD(+) + 4 H(+)(out). NDH-1 shuttles electrons from NADH, via FMN and iron-sulfur (Fe-S) centers, to quinones in the respiratory chain. The immediate electron acceptor for the enzyme in this species is believed to be ubiquinone. Couples the redox reaction to proton translocation (for every two electrons transferred, four hydrogen ions are translocated across the cytoplasmic membrane), and thus conserves the redox energy in a proton gradient. In Methylobacillus flagellatus (strain ATCC 51484 / DSM 6875 / VKM B-1610 / KT), this protein is NADH-quinone oxidoreductase subunit I.